A 217-amino-acid chain; its full sequence is ATP-dependent Clp protease proteolytic subunit (217 aa).

Residue Ser121 is the Nucleophile of the active site. His146 is an active-site residue.

Belongs to the peptidase S14 family. As to quaternary structure, fourteen ClpP subunits assemble into 2 heptameric rings which stack back to back to give a disk-like structure with a central cavity, resembling the structure of eukaryotic proteasomes.

It localises to the cytoplasm. It carries out the reaction Hydrolysis of proteins to small peptides in the presence of ATP and magnesium. alpha-casein is the usual test substrate. In the absence of ATP, only oligopeptides shorter than five residues are hydrolyzed (such as succinyl-Leu-Tyr-|-NHMec, and Leu-Tyr-Leu-|-Tyr-Trp, in which cleavage of the -Tyr-|-Leu- and -Tyr-|-Trp bonds also occurs).. Functionally, cleaves peptides in various proteins in a process that requires ATP hydrolysis. Has a chymotrypsin-like activity. Plays a major role in the degradation of misfolded proteins. This Burkholderia cenocepacia (strain HI2424) protein is ATP-dependent Clp protease proteolytic subunit.